The primary structure comprises 294 residues: ATP synthase gamma chain (294 aa).

This sequence belongs to the ATPase gamma chain family. F-type ATPases have 2 components, CF(1) - the catalytic core - and CF(0) - the membrane proton channel. CF(1) has five subunits: alpha(3), beta(3), gamma(1), delta(1), epsilon(1). CF(0) has three main subunits: a, b and c.

It is found in the cell inner membrane. Produces ATP from ADP in the presence of a proton gradient across the membrane. The gamma chain is believed to be important in regulating ATPase activity and the flow of protons through the CF(0) complex. This chain is ATP synthase gamma chain, found in Campylobacter jejuni (strain RM1221).